We begin with the raw amino-acid sequence, 206 residues long: LexA repressor (206 aa).

The segment at residues 28-48 is a DNA-binding region (H-T-H motif); it reads VREIGEAVGLASSSTVHGHLA. Residues serine 128 and lysine 166 each act as for autocatalytic cleavage activity in the active site.

Belongs to the peptidase S24 family. In terms of assembly, homodimer.

It carries out the reaction Hydrolysis of Ala-|-Gly bond in repressor LexA.. In terms of biological role, represses a number of genes involved in the response to DNA damage (SOS response), including recA and lexA. In the presence of single-stranded DNA, RecA interacts with LexA causing an autocatalytic cleavage which disrupts the DNA-binding part of LexA, leading to derepression of the SOS regulon and eventually DNA repair. In Bacillus velezensis (strain DSM 23117 / BGSC 10A6 / LMG 26770 / FZB42) (Bacillus amyloliquefaciens subsp. plantarum), this protein is LexA repressor.